The chain runs to 346 residues: 26S proteasome non-ATPase regulatory subunit 4 (346 aa).

A VWFA domain is found at 5-190 (STMICVDNSE…LTDALLQSSV (186 aa)). UIM domains lie at 216 to 235 (ENDPDLALALRVSMEEERAR) and 273 to 292 (TEEQQLEWALRLSMQENAPA). Residues 290-346 (APAEQPQVQHEQMDVDGAPAVGGDNLDDLMNNPELLQQIVDDLPAANAEKDDDKEKK) form a disordered region. Positions 337 to 346 (AEKDDDKEKK) are enriched in basic and acidic residues.

It belongs to the proteasome subunit S5A family. The 26S proteasome is composed of a core protease, known as the 20S proteasome, capped at one or both ends by the 19S regulatory complex (RC). The RC is composed of at least 18 different subunits in two subcomplexes, the base and the lid, which form the portions proximal and distal to the 20S proteolytic core, respectively. Broadly expressed with high expression in the pharynx, intestine, hypodermis and spermatheca and weak expression in the excretory cell, body wall muscle, vulva and somatic gonad.

It is found in the cytoplasm. The protein resides in the nucleus. Binds and presumably selects ubiquitin-conjugates for destruction. Required for protein degradation and ubiquitin-proteasome system (UBS) function and regulates proteasomal subunit expression. Involvement in UBS might be cell type specific. Regulator of the autophagy-lysosome pathway that may confer resistance to autophagy by regulating the expression of autophagy-related proteins such as lgg-1, and by regulating lysosome formation, possibly by modulating elt-2 activity. Required for fertility, sperm production, and sex determination through regulation of tra-2 protein. Plays a role in the elimination of paternal mitochondria in fertilized eggs. In Caenorhabditis elegans, this protein is 26S proteasome non-ATPase regulatory subunit 4.